We begin with the raw amino-acid sequence, 502 residues long: Keratin, type II cytoskeletal 8 (502 aa).

A head region spans residues 1–98 (MSVRSTKVTY…DPSIQQVRTE (98 aa)). Phosphoserine occurs at positions 13, 26, 37, and 40. The interval 99-134 (EKEQIKTLNNKFASFIDKVRFLEQQNKMLETKWNLL) is coil 1A. The 312-residue stretch at 99–410 (EKEQIKTLNN…KLLEGEESRL (312 aa)) folds into the IF rod domain. The segment at 135-151 (QNQKTTRSNMDGMFEAY) is linker 1. Positions 152–243 (ISNLRRQLDG…QLYEEELREM (92 aa)) are coil 1B. Residues 244–267 (QSQISDTSVVLSMDNNRSLDLDGI) are linker 12. The tract at residues 268–406 (IAEVRAQYED…ATYRKLLEGE (139 aa)) is coil 2. Residues 269-390 (AEVRAQYEDV…DYQELMNVKL (122 aa)) form a necessary for interaction with PNN region. Positions 407-502 (ESRLESGFQN…SESSDVFSKP (96 aa)) are tail. 4 positions are modified to phosphoserine: Ser425, Ser428, Ser436, and Ser444.

It belongs to the intermediate filament family. In terms of assembly, heterotetramer of two type I and two type II keratins. Keratin-8 associates with keratin-18. Expressed in oocytes, eggs, embryos, liver and intestinal mucosa.

The protein localises to the cytoplasm. It is found in the nucleus. The protein resides in the nucleoplasm. It localises to the nucleus matrix. Its function is as follows. Together with KRT19, helps to link the contractile apparatus to dystrophin at the costameres of striated muscle. This chain is Keratin, type II cytoskeletal 8, found in Xenopus laevis (African clawed frog).